The primary structure comprises 260 residues: NAD kinase (260 aa).

Asp-49 serves as the catalytic Proton acceptor. NAD(+)-binding positions include 49 to 50 (DG), 119 to 120 (NE), Asp-149, Ala-157, and 160 to 165 (TAYNLS).

This sequence belongs to the NAD kinase family. Requires a divalent metal cation as cofactor.

It is found in the cytoplasm. It catalyses the reaction NAD(+) + ATP = ADP + NADP(+) + H(+). Functionally, involved in the regulation of the intracellular balance of NAD and NADP, and is a key enzyme in the biosynthesis of NADP. Catalyzes specifically the phosphorylation on 2'-hydroxyl of the adenosine moiety of NAD to yield NADP. The protein is NAD kinase of Caulobacter vibrioides (strain ATCC 19089 / CIP 103742 / CB 15) (Caulobacter crescentus).